The chain runs to 489 residues: NF-kappa-B inhibitor cactus (489 aa).

The span at 1–26 shows a compositional bias: low complexity; sequence MPSPTKAAEAATKATATSDCSCSAAS. Disordered regions lie at residues 1-138 and 163-203; these read MPSP…SMRL and NNLG…APPS. Ser-45 carries the phosphoserine; by PKC modification. Polar residues predominate over residues 69 to 86; it reads NETSDSGFISGPQSSQIC. Ser-135 is subject to Phosphoserine; by PKC. A compositionally biased stretch (polar residues) spans 163 to 180; it reads NNLGQSSSTQITGRSKFQ. Thr-174 bears the Phosphothreonine; by PKC mark. The span at 181-203 shows a compositional bias: low complexity; it reads SSTASTANANPSGXGATSSAPPS. ANK repeat units follow at residues 220 to 252, 256 to 285, 287 to 316, 350 to 379, and 384 to 413; these read DGDTPXHLACISGSVEVVAALIRMAPHPCLLNI, VAQTPLHLAALTAQPNIMRILLLAGAEVRD, HGNTALHLSCIAGEKQCVRALTEEFGATEI, DGERCVHLAAEAGHIDILRILVSHGADINA, and SGRTPLHIAIEGCNEDLANFLLDECEKLNL. The residue at position 308 (Thr-308) is a Phosphothreonine; by PKC. Ser-384 is subject to Phosphoserine; by PKC.

It is found in the cytoplasm. Involved in the formation of the dorsoventral pattern. It inhibits nuclear translocation of the dorsal morphogen in the dorsal region of the embryo. The protein is NF-kappa-B inhibitor cactus (cact) of Drosophila yakuba (Fruit fly).